The chain runs to 470 residues: ATP synthase subunit beta (470 aa).

148-155 (GGAGVGKT) serves as a coordination point for ATP.

The protein belongs to the ATPase alpha/beta chains family. In terms of assembly, F-type ATPases have 2 components, CF(1) - the catalytic core - and CF(0) - the membrane proton channel. CF(1) has five subunits: alpha(3), beta(3), gamma(1), delta(1), epsilon(1). CF(0) has three main subunits: a(1), b(2) and c(9-12). The alpha and beta chains form an alternating ring which encloses part of the gamma chain. CF(1) is attached to CF(0) by a central stalk formed by the gamma and epsilon chains, while a peripheral stalk is formed by the delta and b chains.

Its subcellular location is the cell inner membrane. It catalyses the reaction ATP + H2O + 4 H(+)(in) = ADP + phosphate + 5 H(+)(out). Produces ATP from ADP in the presence of a proton gradient across the membrane. The catalytic sites are hosted primarily by the beta subunits. This is ATP synthase subunit beta from Teredinibacter turnerae (strain ATCC 39867 / T7901).